A 166-amino-acid polypeptide reads, in one-letter code: Small ribosomal subunit protein uS4 (166 aa).

One can recognise an S4 RNA-binding domain in the interval 103-165 (RRLQTVVYKK…PTSPYFKKAQ (63 aa)).

Belongs to the universal ribosomal protein uS4 family. Part of the 30S ribosomal subunit. Contacts protein S5. The interaction surface between S4 and S5 is involved in control of translational fidelity.

In terms of biological role, one of the primary rRNA binding proteins, it binds directly to 16S rRNA where it nucleates assembly of the body of the 30S subunit. Its function is as follows. With S5 and S12 plays an important role in translational accuracy. This is Small ribosomal subunit protein uS4 from Ignicoccus hospitalis (strain KIN4/I / DSM 18386 / JCM 14125).